Here is a 104-residue protein sequence, read N- to C-terminus: MVRLGQVMYLHKDAYEEYAKRHAELWPEMKTALKKYGATNYSIFLNKLTGQTFAYLEVPDEATYNEIAETDICKKWWKYMEPLMDTNEDNSPVTTDLQEVFHLD.

Y18 serves as a coordination point for substrate. Residue H22 is the Proton donor of the active site. Residues Y41 and 76–77 (WW) contribute to the substrate site.

Belongs to the rhamnose mutarotase family. As to quaternary structure, homodimer.

The protein resides in the cytoplasm. It carries out the reaction alpha-L-rhamnose = beta-L-rhamnose. It participates in carbohydrate metabolism; L-rhamnose metabolism. Its function is as follows. Involved in the anomeric conversion of L-rhamnose. This chain is L-rhamnose mutarotase, found in Lactiplantibacillus plantarum (strain ATCC BAA-793 / NCIMB 8826 / WCFS1) (Lactobacillus plantarum).